The primary structure comprises 387 residues: 3-ketoacyl-CoA thiolase (387 aa).

Residue Cys-91 is the Acyl-thioester intermediate of the active site. Catalysis depends on proton acceptor residues His-343 and Cys-373.

The protein belongs to the thiolase-like superfamily. Thiolase family. In terms of assembly, heterotetramer of two alpha chains (FadB) and two beta chains (FadA).

It is found in the cytoplasm. The catalysed reaction is an acyl-CoA + acetyl-CoA = a 3-oxoacyl-CoA + CoA. Its pathway is lipid metabolism; fatty acid beta-oxidation. Functionally, catalyzes the final step of fatty acid oxidation in which acetyl-CoA is released and the CoA ester of a fatty acid two carbons shorter is formed. This Escherichia coli O139:H28 (strain E24377A / ETEC) protein is 3-ketoacyl-CoA thiolase.